Consider the following 450-residue polypeptide: Phosphoglucosamine mutase (450 aa).

Residue S101 is the Phosphoserine intermediate of the active site. Mg(2+)-binding residues include S101, D242, D244, and D246. Phosphoserine is present on S101.

The protein belongs to the phosphohexose mutase family. It depends on Mg(2+) as a cofactor. Post-translationally, activated by phosphorylation.

It catalyses the reaction alpha-D-glucosamine 1-phosphate = D-glucosamine 6-phosphate. Its function is as follows. Catalyzes the conversion of glucosamine-6-phosphate to glucosamine-1-phosphate. The chain is Phosphoglucosamine mutase from Rhodopseudomonas palustris (strain BisA53).